The primary structure comprises 441 residues: Ribulose bisphosphate carboxylase/oxygenase activase, chloroplastic (441 aa).

167 to 174 (VWGGKGQG) lines the ATP pocket.

Belongs to the RuBisCO activase family.

Its subcellular location is the plastid. It localises to the chloroplast stroma. In terms of biological role, activation of RuBisCO (ribulose-1,5-bisphosphate carboxylase/oxygenase; EC 4.1.1.39) involves the ATP-dependent carboxylation of the epsilon-amino group of lysine leading to a carbamate structure. The protein is Ribulose bisphosphate carboxylase/oxygenase activase, chloroplastic (RCA1) of Phaseolus vulgaris (Kidney bean).